A 342-amino-acid polypeptide reads, in one-letter code: UDP-3-O-(3-hydroxymyristoyl)glucosamine N-acyltransferase (342 aa).

The active-site Proton acceptor is His239.

It belongs to the transferase hexapeptide repeat family. LpxD subfamily. In terms of assembly, homotrimer.

It catalyses the reaction a UDP-3-O-[(3R)-3-hydroxyacyl]-alpha-D-glucosamine + a (3R)-hydroxyacyl-[ACP] = a UDP-2-N,3-O-bis[(3R)-3-hydroxyacyl]-alpha-D-glucosamine + holo-[ACP] + H(+). The enzyme catalyses UDP-3-O-[(3R)-3-hydroxytetradecanoyl]-alpha-D-glucosamine + (3R)-hydroxytetradecanoyl-[ACP] = UDP-2-N,3-O-bis[(3R)-3-hydroxytetradecanoyl]-alpha-D-glucosamine + holo-[ACP] + H(+). It functions in the pathway glycolipid biosynthesis; lipid IV(A) biosynthesis; lipid IV(A) from (3R)-3-hydroxytetradecanoyl-[acyl-carrier-protein] and UDP-N-acetyl-alpha-D-glucosamine: step 3/6. Catalyzes the N-acylation of UDP-3-O-(hydroxytetradecanoyl)glucosamine using 3-hydroxytetradecanoyl-ACP as the acyl donor. Is involved in the biosynthesis of lipid A, a phosphorylated glycolipid that anchors the lipopolysaccharide to the outer membrane of the cell. This is UDP-3-O-(3-hydroxymyristoyl)glucosamine N-acyltransferase from Photorhabdus laumondii subsp. laumondii (strain DSM 15139 / CIP 105565 / TT01) (Photorhabdus luminescens subsp. laumondii).